The following is a 544-amino-acid chain: Chaperonin GroEL 2 (544 aa).

ATP is bound by residues threonine 29–proline 32, aspartate 86–threonine 90, glycine 413, and aspartate 495. A disordered region spans residues proline 525 to tyrosine 544. Residues alanine 533–tyrosine 544 show a composition bias toward gly residues.

The protein belongs to the chaperonin (HSP60) family. Forms a cylinder of 14 subunits composed of two heptameric rings stacked back-to-back. Interacts with the co-chaperonin GroES.

It is found in the cytoplasm. The enzyme catalyses ATP + H2O + a folded polypeptide = ADP + phosphate + an unfolded polypeptide.. Functionally, together with its co-chaperonin GroES, plays an essential role in assisting protein folding. The GroEL-GroES system forms a nano-cage that allows encapsulation of the non-native substrate proteins and provides a physical environment optimized to promote and accelerate protein folding. This is Chaperonin GroEL 2 from Synechococcus sp. (strain JA-3-3Ab) (Cyanobacteria bacterium Yellowstone A-Prime).